Consider the following 51-residue polypeptide: Insulin (51 aa).

3 disulfide bridges follow: C7–C37, C19–C50, and C36–C41.

Belongs to the insulin family. In terms of assembly, heterodimer of a B chain and an A chain linked by two disulfide bonds.

It localises to the secreted. Its function is as follows. Insulin decreases blood glucose concentration. It increases cell permeability to monosaccharides, amino acids and fatty acids. It accelerates glycolysis, the pentose phosphate cycle, and glycogen synthesis in liver. This chain is Insulin (ins), found in Anguilla rostrata (American eel).